The primary structure comprises 477 residues: E3 ubiquitin-protein ligase TRIM17 (477 aa).

The RING-type zinc finger occupies 16-66 (CSICLDYFTDPVMTTCGHNFCRACIQLSWEKARGKKGRRKRKGSFPCPECR). A B box-type zinc finger spans residues 94 to 135 (QKQDLCQEHHEPLKLFCQKDQSPICVVCRESREHRLHRVLPA). Zn(2+) contacts are provided by cysteine 99, histidine 102, cysteine 121, and histidine 127. Positions 135–223 (AEEAVQGYKL…TASRLRESVA (89 aa)) form a coiled coil. Residues 277–475 (PRTVCRVPGQ…MVISTVTMWV (199 aa)) form the B30.2/SPRY domain.

Belongs to the TRIM/RBCC family. As to quaternary structure, interacts (via coiled coil) with TRIM44 (via coiled coil). Interacts with TRIM28; this interaction prevents TRIM28 activity on BCL2A1. Interacts with TRIM41; this interaction prevents TRIM41 activity on ZSCAN2. Interacts with BECN1. Interacts with NFATC3 and NFATC4; these interactions prevent NFATC3 and NFATC4 nuclear localization. Post-translationally, auto-ubiquitinated. In terms of tissue distribution, almost exclusively in the testis.

The protein resides in the cytoplasm. The protein localises to the lysosome. The catalysed reaction is S-ubiquitinyl-[E2 ubiquitin-conjugating enzyme]-L-cysteine + [acceptor protein]-L-lysine = [E2 ubiquitin-conjugating enzyme]-L-cysteine + N(6)-ubiquitinyl-[acceptor protein]-L-lysine.. It functions in the pathway protein modification; protein ubiquitination. In terms of biological role, E3 ubiquitin ligase that plays important roles in the regulation of neuronal apoptosis, selective autophagy or cell proliferation. Stimulates the degradation of kinetochore ZW10 interacting protein ZWINT in a proteasome-dependent manner, leading to negative regulation of cell proliferation. Inhibits autophagic degradation of diverse known targets while contributing to autophagy of midbodies. Autophagy-inhibitory activity involves MCL1, which TRIM17 assembles into complexes with the key autophagy regulator BECN1. Controls neuronal apoptosis by mediating ubiquitination and degradation of MCL1 to initiate neuronal death. In addition, regulates NFAT transcription factors NFATC3 and NFATC4 activities by preventing their nuclear localization, thus inhibiting their transcriptional activities. Decreases TRIM41-mediated degradation of ZSCAN2 thereby stimulating alpha-synuclein/SNCA transcription in neuronal cells. Prevents the E3 ubiquitin-ligase activity of TRIM28 and its interaction with anti-apoptotic BCL2A1, blocking TRIM28 from ubiquitinating BCL2A1. In Homo sapiens (Human), this protein is E3 ubiquitin-protein ligase TRIM17 (TRIM17).